The following is a 71-amino-acid chain: Large ribosomal subunit protein bL28 (71 aa).

The protein belongs to the bacterial ribosomal protein bL28 family.

This chain is Large ribosomal subunit protein bL28, found in Finegoldia magna (strain ATCC 29328 / DSM 20472 / WAL 2508) (Peptostreptococcus magnus).